A 149-amino-acid polypeptide reads, in one-letter code: Calmodulin (149 aa).

The residue at position 2 (Ala2) is an N-acetylalanine. EF-hand domains lie at 8-43, 44-79, 81-116, and 117-149; these read EQIA…LGQN, PTEA…KMKD, DSEE…LGEK, and LTDE…MTTK. 14 residues coordinate Ca(2+): Asp21, Asp23, Asp25, Thr27, Glu32, Asp57, Asp59, Asn61, Thr63, Glu68, Asp94, Asp96, Asn98, and Glu105. Lys116 carries the post-translational modification N6,N6,N6-trimethyllysine. Residues Asp130, Asp132, Asp134, Gln136, and Glu141 each contribute to the Ca(2+) site.

The protein belongs to the calmodulin family. Interacts (in the presence of Ca(2+)) with pde-1, madf-3, rpl-7A, tax-6, efk-1, npp-1, obr-4, sos-1, akt-1, unc-13, tag-196, ugt-48, nmy-2, F27D4.4, ddx-23, efa-6 and R11H6.4.

Calmodulin mediates the control of a large number of enzymes, ion channels and other proteins by Ca(2+). Among the enzymes to be stimulated by the calmodulin-Ca(2+) complex are a number of protein kinases and phosphatases. The sequence is that of Calmodulin (cmd-1) from Caenorhabditis elegans.